Consider the following 263-residue polypeptide: Oxidoreductase UcpA (263 aa).

An NAD(+)-binding site is contributed by L10–N32. S141 provides a ligand contact to substrate. Y155 functions as the Proton acceptor in the catalytic mechanism.

The protein belongs to the short-chain dehydrogenases/reductases (SDR) family.

The protein is Oxidoreductase UcpA (ucpA) of Salmonella typhi.